Consider the following 257-residue polypeptide: Transcription factor LBX2 (257 aa).

The disordered stretch occupies residues 1-43; the sequence is MTSSSKDMKAGSVLQSSGEERRRGPLDQLPPPANSNKPLTPFS. The required for convergent extension movement and hypaxial myogenesis during gastrulation. Required for the formation of thick and thin myofilaments. Required for myod1 expression in the pectoral fin bud. Required for continuous expression of cxcl12a in the posterior lateral mesoderm at the tail bud stage and in adaxial cells at the 10-somite stage stretch occupies residues 1–46; the sequence is MTSSSKDMKAGSVLQSSGEERRRGPLDQLPPPANSNKPLTPFSIED. Residues 126–185 constitute a DNA-binding region (homeobox); that stretch reads RRKSRTAFTNHQIYELEKRFLYQKYLSPADRDQIAQQLGLTNAQVITWFQNRRAKLKRDL. Positions 206 to 257 are disordered; it reads LVSMEDMEDAHGGSGPISPSLSPRAFPQSPSSSRGQTTDEFSEEDEEIEVDD. The segment covering 233–243 has biased composition (polar residues); the sequence is QSPSSSRGQTT. Acidic residues predominate over residues 245–257; that stretch reads EFSEEDEEIEVDD.

In terms of assembly, interacts (via N-terminus) with tle3a/gro2 (via C-terminus).

It is found in the nucleus. Functionally, transcription factor required in several developmental processes. Involved in axis formation during embryonic development by inhibiting tle3a/gro2 from binding to tcf7l1a, thereby facilitating ctnnb1-mediated transcription of canonical Wnt/CTNNB1 signaling target genes. Regulates convergent extension movements and hypaxial myogenesis during gastrulation by activating non-canonical Wnt signaling via wnt5b. Required for the formation of myofibrils and fusion of fast muscle precursor cells, potentially via transcriptional regulation of genes specific to thick and thin myofilaments. Regulates the migration of the posterior lateral line primordium during embryonic development, possibly via regulation of cxcl12a/sdf1a expression in the posterior lateral mesoderm, thereby modulating the deposition of neuromasts at correct intervals. The sequence is that of Transcription factor LBX2 from Danio rerio (Zebrafish).